An 801-amino-acid chain; its full sequence is MRTPTLARLPCRAVSGLTRSSARLQSQNFLTRRCASTAVLRSPTLAPAYQSALSKHFQQRRNASSTAAAVLEAAAANPDTLSQEAIIENLDPVEAARLSRVRNIGIAAHIDSGKTTCTERVLFYTGRIKAIHEVRGRDAVGAKMDSMDLEREKGITIQSAATFCDWVKKDAEGKEQKYHLNLIDTPGHIDFTIEVERALRVLDGAVMILCAVSGVQSQTITVDRQMRRYNVPRISFVNKMDRMGANPFKAVDQINKKLKIPAAAVQVPIGAEDEFEGVVDLLRMKAIYNRGPSGEELFETDEIPEKVKALAEERRQMLIETLADVDDEIAEIFLMEEVPTEDQIRQAIRRATINLKFTPVFMGSALANKSVQPMLDGVIDYLPNPSEVQNLALDKKRNEASVKLVPYNSLPMVGLAFKLEESNFGQLTYIRVYQGTLRKGSFVYNARNDKKVKIPRIVRMHSNEMEDVTEVGAGEICAVFGVECASGDTFTDGQLGYTMSSMFVPEPVISLSIKPKNNKDGANFSKAMARFQREDPTFRVTFDAESEQTLISGMGELHLEIYLERMRREYRVDCETGPPQVAYRETLGERVEFDHLLKKQSGGPGDYARVVGWMEPTGNLGENVFEEQIVGGSISEKFLFACEKGFHLSCDKGPLIGHKVLGTKMVINDGATHMTDSSEMAFKNATQQAFRKAFKESNPAVLEPIMKTVVTAPSEFQGDVIALLNKRNATINDSEVGVDEFTVYADCSLNGMFGISSHLRAATQGKGEYTMEFSHYERAPPHLQKDLIAKYQKAQADRHKK.

A mitochondrion-targeting transit peptide spans 1 to 62 (MRTPTLARLP…LSKHFQQRRN (62 aa)). The tr-type G domain maps to 99–386 (SRVRNIGIAA…GVIDYLPNPS (288 aa)). GTP-binding positions include 108–115 (AHIDSGKT), 184–188 (DTPGH), and 238–241 (NKMD).

It belongs to the TRAFAC class translation factor GTPase superfamily. Classic translation factor GTPase family. EF-G/EF-2 subfamily.

The protein localises to the mitochondrion. It functions in the pathway protein biosynthesis; polypeptide chain elongation. In terms of biological role, mitochondrial GTPase that catalyzes the GTP-dependent ribosomal translocation step during translation elongation. During this step, the ribosome changes from the pre-translocational (PRE) to the post-translocational (POST) state as the newly formed A-site-bound peptidyl-tRNA and P-site-bound deacylated tRNA move to the P and E sites, respectively. Catalyzes the coordinated movement of the two tRNA molecules, the mRNA and conformational changes in the ribosome. The polypeptide is Elongation factor G, mitochondrial (mef1) (Aspergillus niger (strain ATCC MYA-4892 / CBS 513.88 / FGSC A1513)).